A 194-amino-acid polypeptide reads, in one-letter code: Peptidyl-tRNA hydrolase (194 aa).

Tyrosine 17 is a tRNA binding site. Catalysis depends on histidine 22, which acts as the Proton acceptor. TRNA contacts are provided by phenylalanine 68, asparagine 70, and asparagine 116.

Belongs to the PTH family. In terms of assembly, monomer.

It localises to the cytoplasm. The catalysed reaction is an N-acyl-L-alpha-aminoacyl-tRNA + H2O = an N-acyl-L-amino acid + a tRNA + H(+). Functionally, hydrolyzes ribosome-free peptidyl-tRNAs (with 1 or more amino acids incorporated), which drop off the ribosome during protein synthesis, or as a result of ribosome stalling. In terms of biological role, catalyzes the release of premature peptidyl moieties from peptidyl-tRNA molecules trapped in stalled 50S ribosomal subunits, and thus maintains levels of free tRNAs and 50S ribosomes. The chain is Peptidyl-tRNA hydrolase from Histophilus somni (strain 2336) (Haemophilus somnus).